Consider the following 518-residue polypeptide: Nuclear receptor ROR-gamma (518 aa).

A modulating region spans residues 1 to 30 (MDRAPQRQHRASRELLAAKKTHTSQIEVIP). NR C4-type zinc fingers lie at residues 31–51 (CKIC…CEGC) and 67–91 (CTRQ…LQKC). The nuclear receptor DNA-binding region spans 31 to 96 (CKICGDKSSG…RLQKCLALGM (66 aa)). Disordered regions lie at residues 105–183 (RMSK…SGSG) and 238–258 (HPGL…SFRS). A compositionally biased stretch (basic and acidic residues) spans 109–118 (KQRDSLHAEV). Low complexity predominate over residues 119–130 (QKQLQQRQQQQQ). An NR LBD domain is found at 269–508 (EIEHLVQSVC…PPLYKELFST (240 aa)). Positions 501 to 506 (LYKELF) match the AF-2 motif.

Belongs to the nuclear hormone receptor family. NR1 subfamily. Interacts (via AF-2 motif) with the coactivator NCOA2 (via LXXLL motif). Interacts with the corepressor NCOR1. Interacts with CRY1. Interacts (via AF-2 motif) with the coactivators NCOA1 and PPARGC1A (via LXXLL motif). Interacts (via AF-2 motif) with PROX1. Interacts with FOXP3. Interacts with NR0B2. As to expression, isoform 1 is widely expressed in many tissues, including liver and adipose, and highly expressed in skeletal muscle. Isoform 2 is primarily expressed in immature thymocytes.

It localises to the nucleus. Its function is as follows. Nuclear receptor that binds DNA as a monomer to ROR response elements (RORE) containing a single core motif half-site 5'-AGGTCA-3' preceded by a short A-T-rich sequence. Key regulator of cellular differentiation, immunity, peripheral circadian rhythm as well as lipid, steroid, xenobiotics and glucose metabolism. Considered to have intrinsic transcriptional activity, have some natural ligands like oxysterols that act as agonists (25-hydroxycholesterol) or inverse agonists (7-oxygenated sterols), enhancing or repressing the transcriptional activity, respectively. Recruits distinct combinations of cofactors to target gene regulatory regions to modulate their transcriptional expression, depending on the tissue, time and promoter contexts. Regulates the circadian expression of clock genes such as CRY1, BMAL1 and NR1D1 in peripheral tissues and in a tissue-selective manner. Competes with NR1D1 for binding to their shared DNA response element on some clock genes such as BMAL1, CRY1 and NR1D1 itself, resulting in NR1D1-mediated repression or RORC-mediated activation of the expression, leading to the circadian pattern of clock genes expression. Therefore influences the period length and stability of the clock. Involved in the regulation of the rhythmic expression of genes involved in glucose and lipid metabolism, including PLIN2 and AVPR1A. Negative regulator of adipocyte differentiation through the regulation of early phase genes expression, such as MMP3. Controls adipogenesis as well as adipocyte size and modulates insulin sensitivity in obesity. In liver, has specific and redundant functions with RORA as positive or negative modulator of expression of genes encoding phase I and Phase II proteins involved in the metabolism of lipids, steroids and xenobiotics, such as SULT1E1. Also plays a role in the regulation of hepatocyte glucose metabolism through the regulation of G6PC1 and PCK1. Regulates the rhythmic expression of PROX1 and promotes its nuclear localization. Plays an indispensable role in the induction of IFN-gamma dependent anti-mycobacterial systemic immunity. In terms of biological role, essential for thymopoiesis and the development of several secondary lymphoid tissues, including lymph nodes and Peyer's patches. Required for the generation of LTi (lymphoid tissue inducer) cells. Regulates thymocyte survival through DNA-binding on ROREs of target gene promoter regions and recruitment of coactivaros via the AF-2. Also plays a key role, downstream of IL6 and TGFB and synergistically with RORA, for lineage specification of uncommitted CD4(+) T-helper (T(H)) cells into T(H)17 cells, antagonizing the T(H)1 program. Probably regulates IL17 and IL17F expression on T(H) by binding to the essential enhancer conserved non-coding sequence 2 (CNS2) in the IL17-IL17F locus. May also play a role in the pre-TCR activation cascade leading to the maturation of alpha/beta T-cells and may participate in the regulation of DNA accessibility in the TCR-J(alpha) locus. This is Nuclear receptor ROR-gamma (RORC) from Homo sapiens (Human).